Here is a 451-residue protein sequence, read N- to C-terminus: Ribulose bisphosphate carboxylase large chain (451 aa).

Lys5 carries the N6,N6,N6-trimethyllysine modification. Residues Asn114 and Thr164 each contribute to the substrate site. Residue Lys166 is the Proton acceptor of the active site. Substrate is bound at residue Lys168. The Mg(2+) site is built by Lys192, Asp194, and Glu195. At Lys192 the chain carries N6-carboxylysine. His285 functions as the Proton acceptor in the catalytic mechanism. Positions 286, 318, and 370 each coordinate substrate.

Belongs to the RuBisCO large chain family. Type I subfamily. Heterohexadecamer of 8 large chains and 8 small chains; disulfide-linked. The disulfide link is formed within the large subunit homodimers. Mg(2+) is required as a cofactor. The disulfide bond which can form in the large chain dimeric partners within the hexadecamer appears to be associated with oxidative stress and protein turnover.

Its subcellular location is the plastid. It localises to the chloroplast. The catalysed reaction is 2 (2R)-3-phosphoglycerate + 2 H(+) = D-ribulose 1,5-bisphosphate + CO2 + H2O. It catalyses the reaction D-ribulose 1,5-bisphosphate + O2 = 2-phosphoglycolate + (2R)-3-phosphoglycerate + 2 H(+). RuBisCO catalyzes two reactions: the carboxylation of D-ribulose 1,5-bisphosphate, the primary event in carbon dioxide fixation, as well as the oxidative fragmentation of the pentose substrate in the photorespiration process. Both reactions occur simultaneously and in competition at the same active site. The polypeptide is Ribulose bisphosphate carboxylase large chain (Aristea glauca).